The chain runs to 213 residues: Large ribosomal subunit protein uL4 (213 aa).

The tract at residues Thr51–Gly90 is disordered. The segment covering Gly63–Arg75 has biased composition (basic residues).

This sequence belongs to the universal ribosomal protein uL4 family. In terms of assembly, part of the 50S ribosomal subunit.

Functionally, one of the primary rRNA binding proteins, this protein initially binds near the 5'-end of the 23S rRNA. It is important during the early stages of 50S assembly. It makes multiple contacts with different domains of the 23S rRNA in the assembled 50S subunit and ribosome. In terms of biological role, forms part of the polypeptide exit tunnel. The sequence is that of Large ribosomal subunit protein uL4 from Malacoplasma penetrans (strain HF-2) (Mycoplasma penetrans).